The sequence spans 355 residues: UDP-N-acetylglucosamine--N-acetylmuramyl-(pentapeptide) pyrophosphoryl-undecaprenol N-acetylglucosamine transferase (355 aa).

UDP-N-acetyl-alpha-D-glucosamine contacts are provided by residues 13-15 (TGG), Asn125, Arg162, Ser190, Ile244, and Gln289.

The protein belongs to the glycosyltransferase 28 family. MurG subfamily.

Its subcellular location is the cell inner membrane. The catalysed reaction is di-trans,octa-cis-undecaprenyl diphospho-N-acetyl-alpha-D-muramoyl-L-alanyl-D-glutamyl-meso-2,6-diaminopimeloyl-D-alanyl-D-alanine + UDP-N-acetyl-alpha-D-glucosamine = di-trans,octa-cis-undecaprenyl diphospho-[N-acetyl-alpha-D-glucosaminyl-(1-&gt;4)]-N-acetyl-alpha-D-muramoyl-L-alanyl-D-glutamyl-meso-2,6-diaminopimeloyl-D-alanyl-D-alanine + UDP + H(+). Its pathway is cell wall biogenesis; peptidoglycan biosynthesis. Functionally, cell wall formation. Catalyzes the transfer of a GlcNAc subunit on undecaprenyl-pyrophosphoryl-MurNAc-pentapeptide (lipid intermediate I) to form undecaprenyl-pyrophosphoryl-MurNAc-(pentapeptide)GlcNAc (lipid intermediate II). The sequence is that of UDP-N-acetylglucosamine--N-acetylmuramyl-(pentapeptide) pyrophosphoryl-undecaprenol N-acetylglucosamine transferase from Neisseria meningitidis serogroup B (strain ATCC BAA-335 / MC58).